Reading from the N-terminus, the 886-residue chain is Isoleucine--tRNA ligase (886 aa).

Positions 60–70 match the 'HIGH' region motif; the sequence is PYANGDIHIGH. Glutamate 546 contacts L-isoleucyl-5'-AMP. The short motif at 587–591 is the 'KMSKS' region element; it reads KMSKS. Lysine 590 lines the ATP pocket. Positions 856, 859, 870, and 873 each coordinate Zn(2+).

It belongs to the class-I aminoacyl-tRNA synthetase family. IleS type 1 subfamily. Monomer. The cofactor is Zn(2+).

The protein localises to the cytoplasm. It carries out the reaction tRNA(Ile) + L-isoleucine + ATP = L-isoleucyl-tRNA(Ile) + AMP + diphosphate. In terms of biological role, catalyzes the attachment of isoleucine to tRNA(Ile). As IleRS can inadvertently accommodate and process structurally similar amino acids such as valine, to avoid such errors it has two additional distinct tRNA(Ile)-dependent editing activities. One activity is designated as 'pretransfer' editing and involves the hydrolysis of activated Val-AMP. The other activity is designated 'posttransfer' editing and involves deacylation of mischarged Val-tRNA(Ile). This chain is Isoleucine--tRNA ligase, found in Mesomycoplasma hyopneumoniae (strain J / ATCC 25934 / NCTC 10110) (Mycoplasma hyopneumoniae).